Consider the following 507-residue polypeptide: Probable aldehyde dehydrogenase (507 aa).

NAD(+) is bound at residue 219–225 (GFGVEAG). Active-site residues include glutamate 263 and cysteine 302.

This sequence belongs to the aldehyde dehydrogenase family.

It catalyses the reaction an aldehyde + NAD(+) + H2O = a carboxylate + NADH + 2 H(+). The protein is Probable aldehyde dehydrogenase of Streptomyces coelicolor (strain ATCC BAA-471 / A3(2) / M145).